Consider the following 218-residue polypeptide: Large ribosomal subunit protein uL1 (218 aa).

This sequence belongs to the universal ribosomal protein uL1 family. In terms of assembly, part of the 50S ribosomal subunit.

Probably involved in E site tRNA release. Binds directly to 23S rRNA. Its function is as follows. Protein L1 is also a translational repressor protein, it controls the translation of its operon by binding to its mRNA. The protein is Large ribosomal subunit protein uL1 of Saccharolobus solfataricus (strain ATCC 35092 / DSM 1617 / JCM 11322 / P2) (Sulfolobus solfataricus).